We begin with the raw amino-acid sequence, 434 residues long: UPF0053 protein YrkA (434 aa).

Positions 1–201 (MTTINLIIFT…YKSGEINQNE (201 aa)) constitute a CNNM transmembrane domain. The next 3 helical transmembrane spans lie at 7 to 27 (IIFT…FAIV), 64 to 84 (LGIT…FEVI), and 101 to 121 (VLIL…VGEL). 2 CBS domains span residues 220 to 282 (MIPR…KIKE) and 289 to 346 (HINP…IRDE).

It belongs to the UPF0053 family.

It localises to the cell membrane. The protein is UPF0053 protein YrkA (yrkA) of Bacillus subtilis (strain 168).